A 320-amino-acid polypeptide reads, in one-letter code: Protein MRH1 (320 aa).

Residues 1 to 34 (MSTFETLIKRGGNEAIKINPPTGADFHITSRGSD) are Extracellular-facing. A helical membrane pass occupies residues 35-55 (WFWTCFCCYLLFGLILTFLMF). Residues 56–62 (RKPVNDR) are Cytoplasmic-facing. The chain crosses the membrane as a helical span at residues 63–83 (FFYLTGIAPNFFMCIAYFTMA). Over 84-116 (SNLGWIPVKAKYNHVQTSTQKEHPGYRQIFYSR) the chain is Extracellular. Residues 117 to 137 (FVGWFLALPWPIIQICMLAGT) traverse the membrane as a helical segment. Residues 138 to 141 (PFWQ) lie on the Cytoplasmic side of the membrane. A helical transmembrane segment spans residues 142–162 (MAFNVCITEFFTVCWLIAACV). The Extracellular segment spans residues 163–167 (HSTYK). The chain crosses the membrane as a helical span at residues 168–188 (WGYYTIGLGAAIVVSISVMTT). Topologically, residues 189–204 (SYNLVKQRDNDIRLTF) are cytoplasmic. The helical transmembrane segment at 205–225 (LVFFSIIMFLWIIAYPTCFGI) threads the bilayer. Topologically, residues 226-238 (TDGGNVLQPDSAG) are extracellular. The chain crosses the membrane as a helical span at residues 239–259 (IFYGIIDLILMCFIPTLLVPI). Residues 260–320 (ANHFGADKLG…KSKKSKKSEE (61 aa)) lie on the Cytoplasmic side of the membrane. The tract at residues 285 to 320 (APVASPRPAATPNLSKDKKKKSKKSKKSKKSKKSEE) is disordered. Ser-289 bears the Phosphoserine mark. Residue Thr-295 is modified to Phosphothreonine. Ser-299 carries the phosphoserine modification. A compositionally biased stretch (basic residues) spans 301–320 (DKKKKSKKSKKSKKSKKSEE).

The protein belongs to the archaeal/bacterial/fungal opsin family.

It localises to the cell membrane. Its subcellular location is the mitochondrion. The protein resides in the bud. The chain is Protein MRH1 (MRH1) from Saccharomyces cerevisiae (strain ATCC 204508 / S288c) (Baker's yeast).